The following is a 65-amino-acid chain: Seminal plasma acrosin inhibitor A1 (65 aa).

A Kazal-like domain is found at 1 to 59 (TRKQPNCNVYRSHLFFCTRQMDPICGTNGKSYANPCIFCSEKGLRNQKFDFGHWGHCRE). Disulfide bonds link C7-C39, C17-C36, and C25-C57. A glycan (O-linked (GalNAc...) serine) is linked at S12. S62 carries an O-linked (GalNAc...) serine glycan.

Post-translationally, the identity of the O-linked saccharides are not reported in Ref.1. The O-linked polysaccharides on Ser-12 and Ser-62 are probably the mucin type linked to GalNAc. As to expression, seminal plasma.

Its subcellular location is the secreted. Inhibits acrosin. The protein is Seminal plasma acrosin inhibitor A1 of Sus scrofa (Pig).